The primary structure comprises 485 residues: NADH-quinone oxidoreductase subunit N (485 aa).

The next 14 helical transmembrane spans lie at 8–28 (LIALLPLLIVGLTVVVVMLSI), 35–55 (FLNATLSVIGLNAALVSLWFV), 71–91 (GFAMLYTGLVLLASLATCTFA), 105–125 (FYLLVLIAALGGILLANANHL), 127–147 (SLFLGIELISLPLFGLVGYAF), 159–179 (YTILSAAASSFLLFGMALVYA), 203–223 (LLAGFGMMIVGLGFKLSLVPF), 235–255 (PAPVSTFLATASKIAIFGVVM), 271–291 (VVLAIIAFASIIFGNLMALSQ), 297–317 (LLGYSSISHLGYLLVALIALQ), 326–346 (VGVYLAGYLFSSLGAFGVVSL), 373–393 (AAVMTVMMLSLAGIPMTLGFI), 408–430 (WWLVGAVVVGSAIGLYYYLRVAV), and 455–475 (IVVLISALLVLVLGVWPQPLI).

It belongs to the complex I subunit 2 family. NDH-1 is composed of 13 different subunits. Subunits NuoA, H, J, K, L, M, N constitute the membrane sector of the complex.

It localises to the cell inner membrane. It catalyses the reaction a quinone + NADH + 5 H(+)(in) = a quinol + NAD(+) + 4 H(+)(out). Its function is as follows. NDH-1 shuttles electrons from NADH, via FMN and iron-sulfur (Fe-S) centers, to quinones in the respiratory chain. The immediate electron acceptor for the enzyme in this species is believed to be ubiquinone. Couples the redox reaction to proton translocation (for every two electrons transferred, four hydrogen ions are translocated across the cytoplasmic membrane), and thus conserves the redox energy in a proton gradient. In Shigella flexneri, this protein is NADH-quinone oxidoreductase subunit N.